We begin with the raw amino-acid sequence, 234 residues long: LexA repressor (234 aa).

The H-T-H motif DNA-binding region spans 41-61 (RAEIAAELGFRSPNAAEEHLK). Active-site for autocatalytic cleavage activity residues include Ser-152 and Lys-189.

Belongs to the peptidase S24 family. Homodimer.

It catalyses the reaction Hydrolysis of Ala-|-Gly bond in repressor LexA.. Its function is as follows. Represses a number of genes involved in the response to DNA damage (SOS response), including recA and lexA. In the presence of single-stranded DNA, RecA interacts with LexA causing an autocatalytic cleavage which disrupts the DNA-binding part of LexA, leading to derepression of the SOS regulon and eventually DNA repair. The polypeptide is LexA repressor (Polaromonas naphthalenivorans (strain CJ2)).